A 771-amino-acid chain; its full sequence is UPF0313 protein PSPTO_4928 (771 aa).

The Radical SAM core domain maps to 371 to 649 (AYDMIRFSVN…KAFLRYHDPK (279 aa)). The [4Fe-4S] cluster site is built by C385, C389, and C392. The disordered stretch occupies residues 683–771 (DTYQSARRKN…KPARKPVVPR (89 aa)). Composition is skewed to basic and acidic residues over residues 726-735 (KPWDKREEAK) and 745-754 (AAKERMDAAK). The segment covering 756–765 (GKGKGGKPAR) has biased composition (basic residues).

It belongs to the UPF0313 family. [4Fe-4S] cluster is required as a cofactor.

This Pseudomonas syringae pv. tomato (strain ATCC BAA-871 / DC3000) protein is UPF0313 protein PSPTO_4928.